The sequence spans 123 residues: Large ribosomal subunit protein bL19c (123 aa).

This sequence belongs to the bacterial ribosomal protein bL19 family.

It localises to the plastid. It is found in the chloroplast. This is Large ribosomal subunit protein bL19c from Pyropia yezoensis (Susabi-nori).